The following is a 201-amino-acid chain: Transmembrane 4 L6 family member 18 (201 aa).

Residues 1–9 lie on the Cytoplasmic side of the membrane; sequence MGSRKCGSC. The chain crosses the membrane as a helical span at residues 10–30; it reads LSSLLIPLALWSIIVNILLYF. The Extracellular segment spans residues 31–49; it reads PNGQASYASSNKLTNYVWY. The helical transmembrane segment at 50 to 70 threads the bilayer; it reads FEGICFSGIMMLVVAAVLLVL. At 71 to 93 the chain is on the cytoplasmic side; the sequence is ENDNNYKCCQSENCSKKYMTVLS. The chain crosses the membrane as a helical span at residues 94-114; that stretch reads MIFSALGIAFSGYCLVISALG. Residues 115 to 157 lie on the Extracellular side of the membrane; sequence LLQGPYCRTLDGWEYAFEGTAGRFLTDSREWIQCLEPAHVVEW. Residues 158–178 form a helical membrane-spanning segment; that stretch reads NIILFSILIALSGLQVIVCLI. The Cytoplasmic portion of the chain corresponds to 179–201; it reads RVVIQLSKSLCGTYSVIIQPGII.

Belongs to the L6 tetraspanin family.

The protein localises to the membrane. The chain is Transmembrane 4 L6 family member 18 (TM4SF18) from Bos taurus (Bovine).